We begin with the raw amino-acid sequence, 734 residues long: MALRFPRFSQGLAQDPTTRRIWFGIATAHDFESHDDITEERLYQNIFASHFGQLAIIFLWTSGNLFHVAWQGNFESWVQDPLHVRPIAHAIWDPHFGQPAVEAFTRGGALGPVNIAYSGVYQWWYTIGLRTNEDLYTGALFLLFLSAISLIAGWLHLQPKWKPSVSWFKNAESRLNHHLSGLFGVSSLAWTGHLVHVAIPASRGEYVRWNNLLDVLPHPQGLGPLFTGQWNLYAQNPDSSSHLFGTSQGAGTAILTLLGGFHPQTQSLWLTDMAHHHLAIAFIFLVAGHMYRTNFGIGHSMKDLLDAHIPPGGRLGRGHKGLYDTINNSLHFQLGLALASLGVITSLVAQHMYSLPAYAFIAQDFTTQAALYTHHQYIAGFIMTGAFAHGAIFFIRDYSPEQNEDNVLARMLDHKEAIISHLSWASLFLGFHTLGLYVHNDVMLAFGTPEKQILIEPIFAQWIQSAHGKTSYGFDVLLSSTNGPAFNAGRSIWLPGWLNAVNETSNSLFLTIGPGDFLVHHAIALGLHTTTLILVKGALDARGSKLMPDKKDFGYSFPCDGPGRGGTCDISAWDAFYLAVFWMLNTIGWVTFYWHWKHITLWQGNVSQFNESSTYLMGWLRDYLWLNSSQLINGYNPFGMNSLSVWAWMFLFGHLVWATGFMFLISWRGYWQELIETLAWAHERTPLANLIRWRDKPVALSIVQARLVGLAHFSVGYIFTYAAFLIASTSGKFG.

Transmembrane regions (helical) follow at residues 46–69, 135–158, 175–199, 273–291, 330–353, 369–395, 417–439, and 517–535; these read IFAS…FHVA, LYTG…LHLQ, LNHH…HVAI, MAHH…GHMY, LHFQ…QHMY, AALY…IFFI, AIIS…LYVH, and FLVH…LILV. Cys-559 and Cys-568 together coordinate [4Fe-4S] cluster. 2 helical membrane-spanning segments follow: residues 575-596 and 643-665; these read AFYL…YWHW and LSVW…MFLI. Residues His-654, Met-662, and Tyr-670 each coordinate chlorophyll a. Trp-671 contributes to the phylloquinone binding site. The chain crosses the membrane as a helical span at residues 707-727; that stretch reads LVGLAHFSVGYIFTYAAFLIA.

Belongs to the PsaA/PsaB family. The PsaA/B heterodimer binds the P700 chlorophyll special pair and subsequent electron acceptors. PSI consists of a core antenna complex that captures photons, and an electron transfer chain that converts photonic excitation into a charge separation. The eukaryotic PSI reaction center is composed of at least 11 subunits. Requires P700 is a chlorophyll a/chlorophyll a' dimer, A0 is one or more chlorophyll a, A1 is one or both phylloquinones and FX is a shared 4Fe-4S iron-sulfur center. as cofactor.

Its subcellular location is the plastid. It is found in the chloroplast thylakoid membrane. It carries out the reaction reduced [plastocyanin] + hnu + oxidized [2Fe-2S]-[ferredoxin] = oxidized [plastocyanin] + reduced [2Fe-2S]-[ferredoxin]. Functionally, psaA and PsaB bind P700, the primary electron donor of photosystem I (PSI), as well as the electron acceptors A0, A1 and FX. PSI is a plastocyanin-ferredoxin oxidoreductase, converting photonic excitation into a charge separation, which transfers an electron from the donor P700 chlorophyll pair to the spectroscopically characterized acceptors A0, A1, FX, FA and FB in turn. Oxidized P700 is reduced on the lumenal side of the thylakoid membrane by plastocyanin. In Daucus carota (Wild carrot), this protein is Photosystem I P700 chlorophyll a apoprotein A2.